The primary structure comprises 138 residues: ATP synthase epsilon chain, chloroplastic (138 aa).

This sequence belongs to the ATPase epsilon chain family. As to quaternary structure, F-type ATPases have 2 components, CF(1) - the catalytic core - and CF(0) - the membrane proton channel. CF(1) has five subunits: alpha(3), beta(3), gamma(1), delta(1), epsilon(1). CF(0) has three main subunits: a, b and c.

Its subcellular location is the plastid. It localises to the chloroplast thylakoid membrane. Functionally, produces ATP from ADP in the presence of a proton gradient across the membrane. This is ATP synthase epsilon chain, chloroplastic from Anthoceros angustus (Hornwort).